Reading from the N-terminus, the 433-residue chain is NADH-ubiquinone oxidoreductase chain 4 (433 aa).

Transmembrane regions (helical) follow at residues 10 to 30, 45 to 65, 80 to 100, 101 to 121, 132 to 152, 169 to 189, 203 to 223, 234 to 254, 261 to 281, 286 to 306, 331 to 353, 366 to 386, and 410 to 430; these read LFFLINPYQIMIYLMIMTLFL, FFFFDLMSLSMVILTVWISIL, IFNFYLLLMMNLLFICFMLEN, LLMFYLFFEAVLFPIILMISG, GFYMLMYTVFGSLPLLILMLL, MGFIFFLMILGFLVKIPMFLF, AGSMILAGVLLKLGFYGLYRF, FSFVLIVISMWGAVLISIFCL, SLIAYSSVSHMGITLAGCVTF, SFGMLMMMIGHGLCSSGLFCL, LSMWWFLFSIINMSAPMTMNLFG, LLLSLPVMMMIFLSACYSMFM, and YLMLLHIIPMIMWFLKINFFM.

It belongs to the complex I subunit 4 family.

The protein resides in the mitochondrion membrane. It carries out the reaction a ubiquinone + NADH + 5 H(+)(in) = a ubiquinol + NAD(+) + 4 H(+)(out). In terms of biological role, core subunit of the mitochondrial membrane respiratory chain NADH dehydrogenase (Complex I) that is believed to belong to the minimal assembly required for catalysis. Complex I functions in the transfer of electrons from NADH to the respiratory chain. The immediate electron acceptor for the enzyme is believed to be ubiquinone. This Rhipicephalus sanguineus (Brown dog tick) protein is NADH-ubiquinone oxidoreductase chain 4 (ND4).